A 273-amino-acid polypeptide reads, in one-letter code: Ribosomal RNA small subunit methyltransferase A (273 aa).

Asparagine 18, leucine 20, glycine 45, glutamate 66, aspartate 91, and asparagine 113 together coordinate S-adenosyl-L-methionine.

Belongs to the class I-like SAM-binding methyltransferase superfamily. rRNA adenine N(6)-methyltransferase family. RsmA subfamily.

It localises to the cytoplasm. It carries out the reaction adenosine(1518)/adenosine(1519) in 16S rRNA + 4 S-adenosyl-L-methionine = N(6)-dimethyladenosine(1518)/N(6)-dimethyladenosine(1519) in 16S rRNA + 4 S-adenosyl-L-homocysteine + 4 H(+). Its function is as follows. Specifically dimethylates two adjacent adenosines (A1518 and A1519) in the loop of a conserved hairpin near the 3'-end of 16S rRNA in the 30S particle. May play a critical role in biogenesis of 30S subunits. In Klebsiella pneumoniae subsp. pneumoniae (strain ATCC 700721 / MGH 78578), this protein is Ribosomal RNA small subunit methyltransferase A.